The sequence spans 113 residues: Mediator of RNA polymerase II transcription subunit 22 (113 aa).

Belongs to the Mediator complex subunit 22 family. In terms of assembly, component of the Mediator complex.

It localises to the nucleus. Its function is as follows. Component of the Mediator complex, a coactivator involved in the regulated transcription of nearly all RNA polymerase II-dependent genes. Mediator functions as a bridge to convey information from gene-specific regulatory proteins to the basal RNA polymerase II transcription machinery. Mediator is recruited to promoters by direct interactions with regulatory proteins and serves as a scaffold for the assembly of a functional preinitiation complex with RNA polymerase II and the general transcription factors. The protein is Mediator of RNA polymerase II transcription subunit 22 (SRB6) of Candida glabrata (strain ATCC 2001 / BCRC 20586 / JCM 3761 / NBRC 0622 / NRRL Y-65 / CBS 138) (Yeast).